Here is a 243-residue protein sequence, read N- to C-terminus: UPF0758 protein Cyan7425_1778 (243 aa).

Residues 112–235 (TIINDPAVAA…FRSLRQTTKL (124 aa)) form the MPN domain. Zn(2+) contacts are provided by His-184, His-186, and Asp-197. The JAMM motif signature appears at 184–197 (HNHPSGNVEPSPED).

It belongs to the UPF0758 family.

The protein is UPF0758 protein Cyan7425_1778 of Cyanothece sp. (strain PCC 7425 / ATCC 29141).